We begin with the raw amino-acid sequence, 459 residues long: Cysteine--tRNA ligase (459 aa).

Cysteine 27 serves as a coordination point for Zn(2+). Residues isoleucine 29–histidine 39 carry the 'HIGH' region motif. 3 residues coordinate Zn(2+): cysteine 208, histidine 233, and glutamate 237. The 'KMSKS' region motif lies at lysine 265–serine 269. Lysine 268 is an ATP binding site.

Belongs to the class-I aminoacyl-tRNA synthetase family. Monomer. It depends on Zn(2+) as a cofactor.

Its subcellular location is the cytoplasm. It catalyses the reaction tRNA(Cys) + L-cysteine + ATP = L-cysteinyl-tRNA(Cys) + AMP + diphosphate. In Francisella philomiragia subsp. philomiragia (strain ATCC 25017 / CCUG 19701 / FSC 153 / O#319-036), this protein is Cysteine--tRNA ligase.